A 432-amino-acid chain; its full sequence is Peptidase B (432 aa).

Lys196 and Asp201 together coordinate Mn(2+). Residue Lys208 is part of the active site. Positions 219, 278, and 280 each coordinate Mn(2+). Arg282 is a catalytic residue.

It belongs to the peptidase M17 family. As to quaternary structure, homohexamer. Mn(2+) serves as cofactor.

It localises to the cytoplasm. The catalysed reaction is Release of an N-terminal amino acid, Xaa, from a peptide or arylamide. Xaa is preferably Glu or Asp but may be other amino acids, including Leu, Met, His, Cys and Gln.. Functionally, probably plays an important role in intracellular peptide degradation. In Yersinia pseudotuberculosis serotype O:1b (strain IP 31758), this protein is Peptidase B.